The primary structure comprises 301 residues: uncharacterized protein (301 aa).

Belongs to the asfivirus E301R family. As to quaternary structure, interacts with host IRF3.

Plays a role in the inhibition of host innate immune system by acting as a negatively regulator of type I interferon production. Mechanistically, interacts with and prevents host IRF3 nuclear localization to inhibit its transcriptional activity. This is an uncharacterized protein from African swine fever virus (isolate Warthog/Namibia/Wart80/1980) (ASFV).